The chain runs to 254 residues: MIKNRCLDIDLETKEKVLIVDDEASIRKILETRLSMIGYFVVTASDGEEALNLFHQEMPDVVILDIMMPKLDGYGVCQEIRKDSDVPIIMLTALGDVADRITGLELGADDYVVKPFSPKELEARIRAVLRRTNKAAFSSHLTTSGIINFNFLTIDLNKRQIYKDNERIRLTGMEFSLLELLISRSGQPFSRADILQEVWGYTPERHVDTRVVDVHISRLRAKLETDPSNPDLILTARGTGYLFQRITDQHVLKT.

Positions 16–129 (KVLIVDDEAS…ELEARIRAVL (114 aa)) constitute a Response regulatory domain. The residue at position 65 (aspartate 65) is a 4-aspartylphosphate. Positions 85 to 103 (DVPIIMLTALGDVADRITG) form a DNA-binding region, H-T-H motif. A DNA-binding region (ompR/PhoB-type) is located at residues 144–245 (SGIINFNFLT…ARGTGYLFQR (102 aa)).

It localises to the plastid. It is found in the chloroplast. Functionally, probable promoter-specific protein mediating the interaction between DNA and RNA polymerase. This chain is Probable transcriptional regulator ycf27 (ycf27), found in Guillardia theta (Cryptophyte).